A 232-amino-acid polypeptide reads, in one-letter code: Phosphoadenosine 5'-phosphosulfate reductase (232 aa).

The active-site Nucleophile; cysteine thiosulfonate intermediate is C228.

The protein belongs to the PAPS reductase family. CysH subfamily.

Its subcellular location is the cytoplasm. It catalyses the reaction [thioredoxin]-disulfide + sulfite + adenosine 3',5'-bisphosphate + 2 H(+) = [thioredoxin]-dithiol + 3'-phosphoadenylyl sulfate. The protein operates within sulfur metabolism; hydrogen sulfide biosynthesis; sulfite from sulfate: step 3/3. Catalyzes the formation of sulfite from phosphoadenosine 5'-phosphosulfate (PAPS) using thioredoxin as an electron donor. This is Phosphoadenosine 5'-phosphosulfate reductase from Synechococcus sp. (strain ATCC 27144 / PCC 6301 / SAUG 1402/1) (Anacystis nidulans).